Here is an 84-residue protein sequence, read N- to C-terminus: MMNLILAFSGVIALYGGYLYLRLRQSQKQAATLQKEKEQLQTQKTVAETKVKNYQVKQKNEENLISRSRTSLLERMHNDGDLRD.

The chain crosses the membrane as a helical span at residues 7 to 23; it reads AFSGVIALYGGYLYLRL.

The protein resides in the membrane. This is an uncharacterized protein from Haemophilus influenzae (strain ATCC 51907 / DSM 11121 / KW20 / Rd).